A 314-amino-acid polypeptide reads, in one-letter code: tRNA(Ile)-lysidine synthase, chloroplastic (314 aa).

Ser-31–Ser-36 is a binding site for ATP.

This sequence belongs to the tRNA(Ile)-lysidine synthase family.

The protein resides in the plastid. Its subcellular location is the chloroplast. It catalyses the reaction cytidine(34) in tRNA(Ile2) + L-lysine + ATP = lysidine(34) in tRNA(Ile2) + AMP + diphosphate + H(+). Functionally, ligates lysine onto the cytidine present at position 34 of the AUA codon-specific tRNA(Ile) that contains the anticodon CAU, in an ATP-dependent manner. Cytidine is converted to lysidine, thus changing the amino acid specificity of the tRNA from methionine to isoleucine. The polypeptide is tRNA(Ile)-lysidine synthase, chloroplastic (Cyanidium caldarium (Red alga)).